The following is a 672-amino-acid chain: Acetoacetyl-CoA synthetase (672 aa).

Belongs to the ATP-dependent AMP-binding enzyme family.

It localises to the cytoplasm. Its subcellular location is the cytosol. It catalyses the reaction acetoacetate + ATP + CoA = acetoacetyl-CoA + AMP + diphosphate. Its function is as follows. Converts acetoacetate to acetoacetyl-CoA in the cytosol. Ketone body-utilizing enzyme, responsible for the synthesis of cholesterol and fatty acids. This chain is Acetoacetyl-CoA synthetase (Aacs), found in Mus musculus (Mouse).